Here is a 1994-residue protein sequence, read N- to C-terminus: MGDGGVNAVGEGVNQSHMLFDRFVQATTCKGTLKAFQELCDFLELKPNEYRVFYHKLKSKLNYWKAKALWAKLDKRASHKEYKKGRACANTKCLIIGAGPCGLRTAIELGFLGAKVVLLEKRDAFSRNNVLHLWPFTIQDLRGLGAKKFYGKFCAGAIDHISIRQLQLMLLKVALLLGIEIHVNVEFKGLIEPPEDQENERIGWRAEVHPRTHPVNELEFDVIIGADGRRNTLSGFRRKEFRGKLAIAITANFINRNTTAEAKVEEISGVAFIFNQKFFQDLREATGIDLENIVYYKDDTHYFVMTAKKQSLLEKGVILHDYADTEMLLSRANVDQKALLSYAREAADFSTNHQLPKLDFAINHYGQPDVAMFDFTCMYASENAALVRQRNGHKLLVALVGDSLLEPFWPMGTGIARGFLAAMDSAWMVRSWAHGSSPLEVLAERESIYRLLPQTTPENVSKNFSQYSVDPTTRYPNISLHQVRPNQVRHLLDTGETRDLRVDLENVVNSSTPKLTRNESIVRSSKLLNWCQRQTEGYRGVSVSDLTTSWKSGLALCALIHRYRPDLIDFESLDEKDVEKNNQLAFDVAEREFGISPIMTGKEMSVVVEPDKLSMVMYLSQFYEMFKDTVPPGENQNLSPEEKAALIASTKSPISFLSKLGQSIAISRKRNPKDKKEKELDGLGKRRKTSQAGQSEDEELQRANRDDRPSIATALAERKIDSAAAANNNNKVKSMATQLLAKFEENAPTQSTGLKRQGSFRKEFPQNIGGSDVCFFCRKRVYVMERLSAEGKFFHRSCFKCDYCGTTLRLSSYAFDVEDGKFYCKPHYCYRLSGVAQRKRPAPAAAPANAKEPQVLAVSPNTVDAPGQAITTQTPAERRPSETEVNGVTEPSVAKRLKGTPERIELENYRLSMMREEELEEVPEETLAEHNLSSVLDKATDIEEGSSSSESDMEEEDEDAEAAGPSDLGGVPWKEAVELHAKLKGESDPGADDDGLHDGDGEMDEDEEEEEDEEDEDEEEEEESSEEPCEEDDDPEAEAGSPDFEPGTEIDQEDIPSDAEAEARSRCIDEVVTLPVDNDKTESQGQVFNTAEKTSANPRELIVDVVLSPIQKPALPIEEVHEVSPVVLVKSPGARFFPEPYLPDKVKQNIPPPQSPDVKTPHSPVAQIIALSPICSQPVPQPGTASPKSPVQPQPCACSPTGNPLSPICTQSQPCNEPPSPLSTSSPVRTQPVPAVTSTPLAKPASENRTNEHLKDSTPELKKTDLIEEFWLKSAEIRKSLGLTPLERSKTAVEKSIVKTPTPESSSPKSYTPEDLSEEQKPTFTGRSIIRRINITLEGQVISPVEPKSNGSEKKDLSSSSGLGLNGSVTTSQTAASDSYNNSDSTMLTPPSSPPPPPPREEPACLQNKKSQVSWDNLLEGTEEPKSETMPIKPRTPVSPPQPKQKPVTAPVPTPRTNPPVVMRVKEPNKPRREEVRKSFVECVDEIPFADDVEDTYDDRTPDASGLEKFYTPPTSKVNRDKPPLHLALAMENGKPNIPGVSRTAKGSQHFSPEAKEIAEERMRAREKSVKSQALKDAMAKQLTKMKDSEVAKGAVAKVAWDIPETKGKSKKQSKAQKDSAVKALESKKQADTLPDRFFSTPSSKALDSSVTSSESSTGGKSKKRSSLFSPRKNKKEKKAKNERLSSTEETPPKHKSLWKAVFSGYKKDKKKKDDKSCPSTPSSSTTGDSGKKKDSPLDRSSDLRLRRNLSFSEDSDLSCDDVLERSSQKSKGDSVYVPHALAFKRSYATKKTYTEEELNAKLTRRVQKAARRQAKQEELKRLHRAQMIQRQLEQVEEKQRQLEERGVAVEKALRGEADYWGESNYSEILDLHLGGMGKKDDPKLMQEWFKLVQEKNALVRYESELMIFARELELEDRQSRLQQELRERMAIDDHLKTEEELAEEKQILNEMLEVVEQRDSLVALLEEQRLREKEEDKDLEAVMLSKGFNLNWA.

The tract at residues 2–498 is monooxygenase domain; sequence GDGGVNAVGE…RHLLDTGETR (497 aa). Residues Cys101, 101–129, Glu120, Arg122, Arg127, Asn129, and Asp402 each bind FAD; that span reads CGLRTAIELGFLGAKVVLLEKRDAFSRNN. A Calponin-homology (CH) domain is found at 521 to 627; sequence IVRSSKLLNW…YLSQFYEMFK (107 aa). Residues 666–708 form a disordered region; sequence ISRKRNPKDKKEKELDGLGKRRKTSQAGQSEDEELQRANRDDR. Basic and acidic residues predominate over residues 674-684; it reads DKKEKELDGLG. An LIM zinc-binding domain is found at 772-834; the sequence is DVCFFCRKRV…KPHYCYRLSG (63 aa). 6 disordered regions span residues 843-900, 917-1064, 1176-1263, 1281-1476, 1493-1555, and 1598-1747; these read PAAA…LKGT, EELE…AEAR, SQPV…ELKK, LGLT…REEV, VEDT…SPEA, and KVAW…LRLR. Composition is skewed to acidic residues over residues 917-926 and 951-961; these read EELEEVPEET and SDMEEEDEDAE. Basic and acidic residues predominate over residues 975-987; sequence EAVELHAKLKGES. Acidic residues-rich tracts occupy residues 1001 to 1037 and 1046 to 1060; these read GEMDEDEEEEEDEEDEDEEEEEESSEEPCEEDDDPEA and PGTEIDQEDIPSDAE. Residues 1200–1215 are compositionally biased toward polar residues; that stretch reads PTGNPLSPICTQSQPC. Composition is skewed to basic and acidic residues over residues 1249 to 1263 and 1287 to 1297; these read RTNEHLKDSTPELKK and ERSKTAVEKSI. Low complexity-rich tracts occupy residues 1299-1314 and 1358-1368; these read KTPTPESSSPKSYTPE and SSSSGLGLNGS. Positions 1369–1389 are enriched in polar residues; sequence VTTSQTAASDSYNNSDSTMLT. Over residues 1437–1458 the composition is skewed to pro residues; sequence PVSPPQPKQKPVTAPVPTPRTN. A compositionally biased stretch (basic and acidic residues) spans 1464-1476; it reads RVKEPNKPRREEV. Residues 1616–1635 show a composition bias toward basic and acidic residues; sequence AQKDSAVKALESKKQADTLP. Low complexity predominate over residues 1649 to 1660; the sequence is SSVTSSESSTGG. Residues 1661-1679 show a composition bias toward basic residues; sequence KSKKRSSLFSPRKNKKEKK. The span at 1680-1693 shows a compositional bias: basic and acidic residues; the sequence is AKNERLSSTEETPP. Residues 1718–1729 are compositionally biased toward low complexity; the sequence is CPSTPSSSTTGD. Residues 1730–1746 are compositionally biased toward basic and acidic residues; it reads SGKKKDSPLDRSSDLRL. Coiled-coil stretches lie at residues 1796–1855 and 1894–1960; these read EEEL…KALR and QEKN…EQRD. Positions 1816–1982 constitute a bMERB domain; sequence KQEELKRLHR…EKEEDKDLEA (167 aa).

This sequence belongs to the Mical family. Requires FAD as cofactor.

Its subcellular location is the cytoplasm. The protein resides in the cytoskeleton. It is found in the nucleus. The enzyme catalyses L-methionyl-[F-actin] + NADPH + O2 + H(+) = L-methionyl-(R)-S-oxide-[F-actin] + NADP(+) + H2O. In terms of biological role, monooxygenase that promotes depolymerization of F-actin by mediating oxidation of specific methionine residues on actin. Acts by modifying actin subunits through the addition of oxygen to form methionine-sulfoxide, leading to promote actin filament severing and prevent repolymerization. Involved in exocytic vesicles tethering and fusion: the monooxygenase activity is required for this process. The sequence is that of Protein-methionine sulfoxide oxidase mical3a (mical3a) from Danio rerio (Zebrafish).